The primary structure comprises 451 residues: Probable plasmid replicative DNA helicase (451 aa).

The SF4 helicase domain occupies 194 to 451; that stretch reads NDSFYDGLPT…SKFSAIKKVW (258 aa). Residue 225–232 coordinates ATP; sequence ARPSIGKT.

This sequence belongs to the helicase family. DnaB subfamily. Homohexamer.

The catalysed reaction is Couples ATP hydrolysis with the unwinding of duplex DNA at the replication fork by translocating in the 5'-3' direction. This creates two antiparallel DNA single strands (ssDNA). The leading ssDNA polymer is the template for DNA polymerase III holoenzyme which synthesizes a continuous strand.. It carries out the reaction ATP + H2O = ADP + phosphate + H(+). A replicative DNA helicase, it participates in initiation and elongation during DNA replication. Travels ahead of the DNA replisome, separating dsDNA into templates for DNA synthesis. A processive ATP-dependent 5'-3' DNA helicase it has DNA-dependent ATPase activity. This chain is Probable plasmid replicative DNA helicase, found in Chlamydia muridarum (strain MoPn / Nigg).